A 517-amino-acid chain; its full sequence is Maturase K (517 aa).

This sequence belongs to the intron maturase 2 family. MatK subfamily.

The protein localises to the plastid. It is found in the chloroplast. Usually encoded in the trnK tRNA gene intron. Probably assists in splicing its own and other chloroplast group II introns. This Trillium grandiflorum (Large-flowered trillium) protein is Maturase K.